A 120-amino-acid polypeptide reads, in one-letter code: Large ribosomal subunit protein bL20 (120 aa).

It belongs to the bacterial ribosomal protein bL20 family.

Functionally, binds directly to 23S ribosomal RNA and is necessary for the in vitro assembly process of the 50S ribosomal subunit. It is not involved in the protein synthesizing functions of that subunit. This is Large ribosomal subunit protein bL20 from Blochmanniella pennsylvanica (strain BPEN).